The following is a 363-amino-acid chain: Cobalt-precorrin-5B C(1)-methyltransferase (363 aa).

It belongs to the CbiD family.

The catalysed reaction is Co-precorrin-5B + S-adenosyl-L-methionine = Co-precorrin-6A + S-adenosyl-L-homocysteine. It functions in the pathway cofactor biosynthesis; adenosylcobalamin biosynthesis; cob(II)yrinate a,c-diamide from sirohydrochlorin (anaerobic route): step 6/10. Catalyzes the methylation of C-1 in cobalt-precorrin-5B to form cobalt-precorrin-6A. The polypeptide is Cobalt-precorrin-5B C(1)-methyltransferase (Treponema denticola (strain ATCC 35405 / DSM 14222 / CIP 103919 / JCM 8153 / KCTC 15104)).